The primary structure comprises 574 residues: Golgin subfamily A member 6-like protein 4 (574 aa).

The span at 1-11 (MWPQPRFPPHP) shows a compositional bias: pro residues. 2 disordered regions span residues 1-77 (MWPQ…YGEG) and 491-552 (KELK…AAGG). Over residues 51–62 (NGSSPDTATSGG) the composition is skewed to polar residues. Positions 157–496 (SKVEQLQDET…EQQVKELKKS (340 aa)) form a coiled coil. Residues 491 to 504 (KELKKSGGAEEPRG) are compositionally biased toward basic and acidic residues. Residues 508–523 (AAAARPVAGAPVPQGA) are compositionally biased toward low complexity.

Belongs to the GOLGA6 family.

The chain is Golgin subfamily A member 6-like protein 4 (GOLGA6L4) from Homo sapiens (Human).